The following is a 438-amino-acid chain: Asparagine--tRNA ligase (438 aa).

Belongs to the class-II aminoacyl-tRNA synthetase family. Homodimer.

It is found in the cytoplasm. The enzyme catalyses tRNA(Asn) + L-asparagine + ATP = L-asparaginyl-tRNA(Asn) + AMP + diphosphate + H(+). This Thermus thermophilus (strain ATCC 27634 / DSM 579 / HB8) protein is Asparagine--tRNA ligase.